The following is a 459-amino-acid chain: Cysteine--tRNA ligase (459 aa).

C28 contacts Zn(2+). Positions 30–40 (ITIYDYCHIGH) match the 'HIGH' region motif. 3 residues coordinate Zn(2+): C209, H234, and E238. A 'KMSKS' region motif is present at residues 266 to 270 (KMSKS). K269 contributes to the ATP binding site.

This sequence belongs to the class-I aminoacyl-tRNA synthetase family. In terms of assembly, monomer. Requires Zn(2+) as cofactor.

Its subcellular location is the cytoplasm. The catalysed reaction is tRNA(Cys) + L-cysteine + ATP = L-cysteinyl-tRNA(Cys) + AMP + diphosphate. The protein is Cysteine--tRNA ligase of Pseudoalteromonas translucida (strain TAC 125).